The following is a 316-amino-acid chain: Calumenin-B (316 aa).

Residues 1–19 (MELRPLVMCFALCVVYASS) form the signal peptide. EF-hand domains are found at residues 69–104 (ESKE…SQKR), 105–140 (WIYD…YILD), 152–187 (QMIS…EEYD), 189–224 (MKDI…QEGD), 230–265 (WVRT…SDYD), and 266–301 (HAEA…FVGS). Ca(2+) is bound by residues D82, D84, D86, Y88, E93, D118, N120, D122, and E129. The N-linked (GlcNAc...) asparagine glycan is linked to N132. 19 residues coordinate Ca(2+): D165, D167, D169, K171, E176, D202, N204, D206, E213, D243, N245, D247, R249, E254, D279, D281, D283, K285, and E290. Positions 313–316 (HDEF) match the Prevents secretion from ER motif.

This sequence belongs to the CREC family. In terms of assembly, interacts with ggcx.

It localises to the endoplasmic reticulum membrane. Its subcellular location is the golgi apparatus. The protein resides in the secreted. The protein localises to the melanosome. It is found in the sarcoplasmic reticulum lumen. Involved in regulation of vitamin K-dependent carboxylation of multiple N-terminal glutamate residues. Seems to inhibit gamma-carboxylase ggcx. Binds 7 calcium ions with a low affinity. The polypeptide is Calumenin-B (calub) (Salmo salar (Atlantic salmon)).